The following is a 378-amino-acid chain: Odorant receptor Or2 (378 aa).

A topological domain (cytoplasmic) is located at residue Met-1. Residues 2–22 form a helical membrane-spanning segment; that stretch reads LIEECPIIGVNVRVWLFWSYL. Residues 23-29 lie on the Extracellular side of the membrane; sequence RRPRLSR. A helical membrane pass occupies residues 30–50; it reads FLVGCIPVAVLNVFQFLKLYS. At 51 to 59 the chain is on the cytoplasmic side; that stretch reads SWGDMSELI. The helical transmembrane segment at 60 to 80 threads the bilayer; the sequence is INGYFTVLYFNLVLRTSFLVI. At 81–120 the chain is on the extracellular side; the sequence is NRRKFETFFEGVAAEYALLEKNDDIRPVLERYTRRGRMLS. Residues 121-141 form a helical membrane-spanning segment; that stretch reads ISNLWLGAFISACFVTYPLFV. Over 142 to 164 the chain is Cytoplasmic; that stretch reads PGRGLPYGVTIPGVDVLATPTYQ. The helical transmembrane segment at 165-185 threads the bilayer; that stretch reads VVFVLQVYLTFPACCMYIPFT. The Extracellular segment spans residues 186–254; sequence SFYATCTLFA…HDLNSLVTHL (69 aa). The chain crosses the membrane as a helical span at residues 255-275; sequence CLLEFLSFGMMLCALLFLLSI. The Cytoplasmic segment spans residues 276-278; that stretch reads SNQ. A helical transmembrane segment spans residues 279–299; it reads LAQMIMIGSYIFMILSQMFAF. Residues 300–378 are Extracellular-facing; it reads YWHANEVLEQ…YFTLLRRVYN (79 aa). An N-linked (GlcNAc...) asparagine glycan is attached at Asn-364.

It belongs to the insect chemoreceptor superfamily. Heteromeric odorant receptor channel (TC 1.A.69) family. Or30a subfamily. As to expression, expressed in male and female antennae and maxillary palps.

The protein localises to the cell membrane. Its function is as follows. Odorant receptor which plays a critical role in the anthropophilic host-seeking behavior; establishes the host preference to transmit malaria. The protein is Odorant receptor Or2 (OR2) of Anopheles gambiae (African malaria mosquito).